A 518-amino-acid chain; its full sequence is ORC1-type DNA replication protein 7 (518 aa).

94-98 (TGKTA) contributes to the ATP binding site. Positions 165–196 (DDDPNALEIGGSPGDDRTGNESSEGSDVSDSF) are disordered. Positions 186-196 (SSEGSDVSDSF) are enriched in low complexity. The ATP site is built by Y318 and R330.

Belongs to the CDC6/cdc18 family.

Its function is as follows. Involved in regulation of DNA replication. Required to initiate DNA replication of the circular chromosome at a nearby autonomously replicating sequence (ARS) oriC1. The polypeptide is ORC1-type DNA replication protein 7 (orc7) (Halobacterium salinarum (strain ATCC 700922 / JCM 11081 / NRC-1) (Halobacterium halobium)).